The sequence spans 292 residues: Tubulin beta chain (292 aa).

GTP contacts are provided by N49 and N71. A disordered region spans residues 265–292 (SEYQQYQDATAEEEGEFDEEEEGDEEAA). The span at 274-292 (TAEEEGEFDEEEEGDEEAA) shows a compositional bias: acidic residues.

It belongs to the tubulin family. In terms of assembly, dimer of alpha and beta chains. A typical microtubule is a hollow water-filled tube with an outer diameter of 25 nm and an inner diameter of 15 nM. Alpha-beta heterodimers associate head-to-tail to form protofilaments running lengthwise along the microtubule wall with the beta-tubulin subunit facing the microtubule plus end conferring a structural polarity. Microtubules usually have 13 protofilaments but different protofilament numbers can be found in some organisms and specialized cells. Mg(2+) is required as a cofactor.

The protein localises to the cytoplasm. The protein resides in the cytoskeleton. Tubulin is the major constituent of microtubules, a cylinder consisting of laterally associated linear protofilaments composed of alpha- and beta-tubulin heterodimers. Microtubules grow by the addition of GTP-tubulin dimers to the microtubule end, where a stabilizing cap forms. Below the cap, tubulin dimers are in GDP-bound state, owing to GTPase activity of alpha-tubulin. This Strongylocentrotus purpuratus (Purple sea urchin) protein is Tubulin beta chain.